The chain runs to 429 residues: UDP-N-acetylglucosamine 1-carboxyvinyltransferase (429 aa).

22 to 23 is a binding site for phosphoenolpyruvate; sequence KN. Arginine 102 lines the UDP-N-acetyl-alpha-D-glucosamine pocket. Cysteine 126 acts as the Proton donor in catalysis. Cysteine 126 is subject to 2-(S-cysteinyl)pyruvic acid O-phosphothioketal. UDP-N-acetyl-alpha-D-glucosamine contacts are provided by residues 171-174, aspartate 316, and isoleucine 338; that span reads KVSV.

Belongs to the EPSP synthase family. MurA subfamily.

The protein localises to the cytoplasm. The enzyme catalyses phosphoenolpyruvate + UDP-N-acetyl-alpha-D-glucosamine = UDP-N-acetyl-3-O-(1-carboxyvinyl)-alpha-D-glucosamine + phosphate. The protein operates within cell wall biogenesis; peptidoglycan biosynthesis. Functionally, cell wall formation. Adds enolpyruvyl to UDP-N-acetylglucosamine. The protein is UDP-N-acetylglucosamine 1-carboxyvinyltransferase of Azorhizobium caulinodans (strain ATCC 43989 / DSM 5975 / JCM 20966 / LMG 6465 / NBRC 14845 / NCIMB 13405 / ORS 571).